Reading from the N-terminus, the 314-residue chain is Olfactory receptor 2W3 (314 aa).

Topologically, residues 1 to 25 (MDGTNGSTQTHFILLGFSDRPHLER) are extracellular. An N-linked (GlcNAc...) asparagine glycan is attached at Asn5. The chain crosses the membrane as a helical span at residues 26–49 (ILFVVILIAYLLTLVGNTTIILVS). The Cytoplasmic portion of the chain corresponds to 50-57 (RLDPHLHT). Residues 58 to 79 (PMYFFLAHLSFLDLSFTTSSIP) form a helical membrane-spanning segment. Residues 80-100 (QLLYNLNGCDKTISYMGCAIQ) are Extracellular-facing. The helical transmembrane segment at 101-120 (LFLFLGLGGVECLLLAVMAY) threads the bilayer. Topologically, residues 121–139 (DRCVAICKPLHYMVIMNPR) are cytoplasmic. A helical membrane pass occupies residues 140 to 158 (LCRGLVSVTWGCGVANSLA). Over 159-195 (MSPVTLRLPRCGHHEVDHFLREMPALIRMACVSTVAI) the chain is Extracellular. The helical transmembrane segment at 196–219 (EGTVFVLAVGVVLSPLVFILLSYS) threads the bilayer. The Cytoplasmic segment spans residues 220-236 (YIVRAVLQIRSASGRQK). The helical transmembrane segment at 237-259 (AFGTCGSHLTVVSLFYGNIIYMY) threads the bilayer. Residues 260-272 (MQPGASSSQDQGM) lie on the Extracellular side of the membrane. The helical transmembrane segment at 273–292 (FLMLFYNIVTPLLNPLIYTL) threads the bilayer. At 293 to 314 (RNREVKGALGRLLLGKRELGKE) the chain is on the cytoplasmic side.

The protein belongs to the G-protein coupled receptor 1 family.

It is found in the cell membrane. Functionally, odorant receptor. In Homo sapiens (Human), this protein is Olfactory receptor 2W3 (OR2W3).